The sequence spans 343 residues: Small ribosomal subunit biogenesis GTPase RsgA (343 aa).

The interval 1 to 32 (MAKRRLSKRQVDRIRERQSQRLDTSVAAPDGK) is disordered. A compositionally biased stretch (basic and acidic residues) spans 9 to 20 (RQVDRIRERQSQ). Residues 109–273 (YGKLKPVAAN…CIDSPGIREF (165 aa)) enclose the CP-type G domain. Residues 156–159 (NKLD) and 215–223 (GQSGVGKSS) contribute to the GTP site. Zn(2+) contacts are provided by Cys297, Cys302, His304, and Cys310.

The protein belongs to the TRAFAC class YlqF/YawG GTPase family. RsgA subfamily. As to quaternary structure, monomer. Associates with 30S ribosomal subunit, binds 16S rRNA. Zn(2+) is required as a cofactor.

It is found in the cytoplasm. Its function is as follows. One of several proteins that assist in the late maturation steps of the functional core of the 30S ribosomal subunit. Helps release RbfA from mature subunits. May play a role in the assembly of ribosomal proteins into the subunit. Circularly permuted GTPase that catalyzes slow GTP hydrolysis, GTPase activity is stimulated by the 30S ribosomal subunit. The chain is Small ribosomal subunit biogenesis GTPase RsgA from Saccharophagus degradans (strain 2-40 / ATCC 43961 / DSM 17024).